We begin with the raw amino-acid sequence, 693 residues long: Sodium-dependent phosphate transport protein 2B (693 aa).

A disordered region spans residues 1–46 (MAPWPELENSQPTSEKYTVKADGEQSAKPEKAKETEKDDTGTPITK). At 1–89 (MAPWPELENS…KWSERDTKGK (89 aa)) the chain is on the cytoplasmic side. Residues 17 to 40 (YTVKADGEQSAKPEKAKETEKDDT) are compositionally biased toward basic and acidic residues. A helical transmembrane segment spans residues 90-110 (ILCVFQGIGKFILLLVFLYFF). The Extracellular portion of the chain corresponds to 111–135 (VCSLDVLSSAFQLVGGKVAGKFFNN). The chain crosses the membrane as a helical span at residues 136–156 (NSIMSNPLAGMVIGVLVTVLV). At 157–212 (QSSSTSTSIVVSMVASSLLPVHAAIPIIMGANIGTSITNTIVALMQAGDRKEFRRA) the chain is on the cytoplasmic side. Residues 213–233 (FAGATVHDFFNWLSVLVLLPL) form a helical membrane-spanning segment. Over 234 to 361 (EAATGYLERL…IFVNFNLSDA (128 aa)) the chain is Extracellular. Cysteines 302 and 349 form a disulfide. N-linked (GlcNAc...) asparagine glycans are attached at residues N307 and N320. The chain crosses the membrane as a helical span at residues 362-382 (IVGTILLITSLLILCTCLILI). At 383–408 (VKLLGSVLRGQVAAVIKKTINTDFPY) the chain is on the cytoplasmic side. The chain crosses the membrane as a helical span at residues 409–429 (PFSWVTGYLAILVGAGMTFIV). Topologically, residues 430–485 (QSSSVFTSAMTPLIGIGVISIQRAYPLTLGANIGTTTTAILAALASPGSTLKSSLQ) are extracellular. The helical transmembrane segment at 486–506 (IALCHFFFNISGIILWYPIPF) threads the bilayer. The Cytoplasmic portion of the chain corresponds to 507-525 (TRLPIRLAKGLGNISSKYR). A helical membrane pass occupies residues 526 to 546 (WFAIVYLIVFFLLIPLAVFGL). Topologically, residues 547–550 (SLIG) are extracellular. The helical transmembrane segment at 551 to 571 (WPVLVGVASPIVLVILLVVVL) threads the bilayer. Residues 572–693 (KILQSFCPGS…TKIVSSVTAL (122 aa)) lie on the Cytoplasmic side of the membrane.

This sequence belongs to the SLC34A transporter family. In terms of processing, glycosylated.

It localises to the apical cell membrane. The enzyme catalyses 3 Na(+)(out) + phosphate(out) = 3 Na(+)(in) + phosphate(in). Its function is as follows. Involved in actively transporting phosphate into cells via Na(+) cotransport. The protein is Sodium-dependent phosphate transport protein 2B (SLC34A2) of Bos taurus (Bovine).